The primary structure comprises 360 residues: Photosystem II protein D1 (360 aa).

Transmembrane regions (helical) follow at residues 29–46 (YIGWFGVVMIPTLLTATS), 118–133 (HFLLGVCCYIGREWEF), and 142–156 (WISVAFTAPVVAASA). Histidine 118 lines the chlorophyll a pocket. Tyrosine 126 is a pheophytin a binding site. [CaMn4O5] cluster contacts are provided by aspartate 170 and glutamate 189. A helical transmembrane segment spans residues 197-218 (LHQLGVAGVFGGSLFSAMHGSL). Histidine 198 contributes to the chlorophyll a binding site. A quinone contacts are provided by residues histidine 215 and 264–265 (SF). A Fe cation-binding site is contributed by histidine 215. Histidine 272 is a binding site for Fe cation. A helical transmembrane segment spans residues 274–288 (FLGLWPVVGIWFTSM). The [CaMn4O5] cluster site is built by histidine 332, glutamate 333, aspartate 342, and alanine 344. A propeptide spanning residues 345-360 (SNESLPLALVAPAING) is cleaved from the precursor.

The protein belongs to the reaction center PufL/M/PsbA/D family. PSII is composed of 1 copy each of membrane proteins PsbA, PsbB, PsbC, PsbD, PsbE, PsbF, PsbH, PsbI, PsbJ, PsbK, PsbL, PsbM, PsbT, PsbX, PsbY, PsbZ, Psb30/Ycf12, at least 3 peripheral proteins of the oxygen-evolving complex and a large number of cofactors. It forms dimeric complexes. The D1/D2 heterodimer binds P680, chlorophylls that are the primary electron donor of PSII, and subsequent electron acceptors. It shares a non-heme iron and each subunit binds pheophytin, quinone, additional chlorophylls, carotenoids and lipids. D1 provides most of the ligands for the Mn4-Ca-O5 cluster of the oxygen-evolving complex (OEC). There is also a Cl(-1) ion associated with D1 and D2, which is required for oxygen evolution. The PSII complex binds additional chlorophylls, carotenoids and specific lipids. is required as a cofactor. Tyr-161 forms a radical intermediate that is referred to as redox-active TyrZ, YZ or Y-Z. In terms of processing, C-terminally processed by CTPA; processing is essential to allow assembly of the oxygen-evolving complex and thus photosynthetic growth.

It is found in the plastid. The protein localises to the chloroplast thylakoid membrane. The catalysed reaction is 2 a plastoquinone + 4 hnu + 2 H2O = 2 a plastoquinol + O2. Photosystem II (PSII) is a light-driven water:plastoquinone oxidoreductase that uses light energy to abstract electrons from H(2)O, generating O(2) and a proton gradient subsequently used for ATP formation. It consists of a core antenna complex that captures photons, and an electron transfer chain that converts photonic excitation into a charge separation. The D1/D2 (PsbA/PsbD) reaction center heterodimer binds P680, the primary electron donor of PSII as well as several subsequent electron acceptors. This Antithamnion sp. (Red alga) protein is Photosystem II protein D1.